Here is a 280-residue protein sequence, read N- to C-terminus: 4-deoxy-L-threo-5-hexosulose-uronate ketol-isomerase (280 aa).

Positions 198, 200, 205, and 247 each coordinate Zn(2+).

It belongs to the KduI family. Requires Zn(2+) as cofactor.

It carries out the reaction 5-dehydro-4-deoxy-D-glucuronate = 3-deoxy-D-glycero-2,5-hexodiulosonate. It functions in the pathway glycan metabolism; pectin degradation; 2-dehydro-3-deoxy-D-gluconate from pectin: step 4/5. Its function is as follows. Catalyzes the isomerization of 5-dehydro-4-deoxy-D-glucuronate to 3-deoxy-D-glycero-2,5-hexodiulosonate. This is 4-deoxy-L-threo-5-hexosulose-uronate ketol-isomerase from Bacteroides fragilis (strain ATCC 25285 / DSM 2151 / CCUG 4856 / JCM 11019 / LMG 10263 / NCTC 9343 / Onslow / VPI 2553 / EN-2).